The sequence spans 271 residues: N-acetylaspartate synthetase (271 aa).

The disordered stretch occupies residues 1 to 38; sequence MTYRGTRKSPCCSPPPRCGPPLPSGPAGSALGPPSSGA. The span at 12–24 shows a compositional bias: pro residues; that stretch reads CSPPPRCGPPLPS. The segment covering 25–37 has biased composition (low complexity); that stretch reads GPAGSALGPPSSG. Residues 89–109 traverse the membrane as a helical segment; the sequence is VYAVIIIMCFVVTKSLLVTCC. The N-acetyltransferase domain occupies 115 to 258; that stretch reads LGMRYYYSRK…HSLLERLFFQ (144 aa).

This sequence belongs to the NAT8 family.

It localises to the cytoplasm. It is found in the microsome membrane. The protein localises to the mitochondrion membrane. The protein resides in the endoplasmic reticulum membrane. It carries out the reaction L-aspartate + acetyl-CoA = N-acetyl-L-aspartate + CoA + H(+). Its function is as follows. Catalyzes the synthesis of N-acetylaspartate acid (NAA) from L-aspartate and acetyl-CoA. The sequence is that of N-acetylaspartate synthetase (nat8l) from Xenopus tropicalis (Western clawed frog).